The chain runs to 411 residues: Immunity-related GTPase family M protein (411 aa).

A disordered region spans residues 1-21; it reads MKPSHKSCEAAPLLPKMPETS. Residues 77–253 enclose the IRG-type G domain; the sequence is IPVSIFVTGD…PELRNTLQTD (177 aa). Residues 86–93, 111–115, and 193–195 each bind GTP; these read DSGNGMSS, TGVVR, and KLD. The residue at position 204 (Ser-204) is a Phosphoserine. GTP is bound at residue 234 to 236; that stretch reads SNL. Lys-272 participates in a covalent cross-link: Glycyl lysine isopeptide (Lys-Gly) (interchain with G-Cter in ubiquitin). The tract at residues 352 to 376 is alpha-K amphipathic helix; the sequence is KLRLMTCTTVNALFCLFKFLPCLCH.

It belongs to the TRAFAC class dynamin-like GTPase superfamily. IRG family. Interacts with ULK1; promoting the coassembly of ULK1 and BECN1. Interacts with BECN1; enhancing BECN1-interacting partners and influencing the composition of the BECN1 complex. Interacts with ATG16L1. Interacts with NOD2; promoting Irgm 'Lys-63'-linked polyubiquitination, which is required for interactions with the core autophagy factors. Interacts with STX17; promoting STX17 recruitment to autophagosomes. Interacts with ATG8 proteins (GABARAP, GABARAPL1, GABARAPL2, MAP1LC3A, MAP1LC3B and MAP1LC3C); promoting STX17 recruitment to autophagosomes. Interacts with TFEB; promoting association between TFEB and PPP3CB and TFEB dephosphorylation. Interacts with PPP3CB; promoting association between TFEB and PPP3CB and TFEB dephosphorylation. Interacts with NLRP3; preventing NLRP3 inflammasome assembly and promoting SQSTM1/p62-dependent autophagic degradation of NLRP3. Interacts with CGAS; promoting SQSTM1/p62-dependent autophagic degradation of CGAS. Interacts with RIGI/RIG-I; promoting SQSTM1/p62-dependent autophagic degradation of RIGI/RIG-I. Interacts with NOD1; promoting SQSTM1/p62-dependent autophagic degradation of RIGI/RIG-I. Interacts with NOD2; promoting SQSTM1/p62-dependent autophagic degradation of RIGI/RIG-I. Interacts with RIPK2; promoting SQSTM1/p62-dependent autophagic degradation of RIGI/RIG-I. Interacts with PIK3CA. Palmitoylated on C-terminal Cys residues. Palmitoylation, together with the alpha-K amphipathic helix, which binds phosphatidylinositol, mediate binding to membranes. In terms of processing, ubiquitinated via 'Lys-63'-linked polyubiquitination in a NOD2-dependent process. 'Lys-63'-linked polyubiquitination is required for interactions with the core autophagy factors. Ubiquitination at Lys-272 by the DCX(WDR77) complex, also named CLR4(WDR77) complex, in intestinal cells, leading to its degradation by the proteasome.

It is found in the golgi apparatus membrane. Its subcellular location is the cell membrane. It localises to the cytoplasmic vesicle. The protein resides in the phagosome membrane. The protein localises to the autophagosome membrane. It is found in the lysosome membrane. Its subcellular location is the late endosome membrane. It localises to the mitochondrion membrane. The protein resides in the cell projection. The protein localises to the phagocytic cup. It carries out the reaction GTP + H2O = GDP + phosphate + H(+). Functionally, immunity-related GTPase that plays important roles in innate immunity and inflammatory response. Acts as a dynamin-like protein that binds to intracellular membranes and promotes remodeling and trafficking of those membranes. Required for clearance of acute protozoan and bacterial infections by interacting with autophagy and lysosome regulatory proteins, thereby promoting the fusion of phagosomes with lysosomes for efficient degradation of cargo including microbes. Regulates selective autophagy, including xenophagy and mitophagy, both directly and indirectly. Directly regulates autophagy by acting as a molecular adapter that promotes the coassembly of the core autophagy machinery to mediate antimicrobial defense: Irgm (1) activates AMPK, which in turn phosphorylates ULK1 and BECN1 to induce autophagy, (2) promotes the coassembly of ULK1 and BECN1, enhancing BECN1-interacting partners and (3) influences the composition of the BECN1 complex, by competing with the negative regulators BCL2 and RUBCN, to trigger autophagy. Also activates autophagy by promoting recruitment of STX17 to autophagosomes. In collaboration with ATG8 proteins, regulate lysosomal biogenesis, a fundamental process for any autophagic pathway, by promoting TFEB dephosphorylation. Also modulates autophagy by assisting with autophagosome formation and preventing lysosomal deacidification. Regulates autophagy by affecting mitochondrial fusion and fission. Also involved in M1 macrophage activation for the production of proinflammatory cytokines. While activating autophagy, acts as a key negative regulator of the inflammatory and interferon responses both by (1) promoting mitophagy and (2) mediating autophagy-dependent degradation of effectors of the inflammatory response. Promotes degradation of damaged and IFNG/IFN-gamma-stressed mitochondria via mitophagy, preventing cytosolic release of ligands that activate inflammation. Negatively regulates interferon-signaling in hematopoietic stem cells, preserving hematopoietic stem cell number and function. Promotes expansion of activated CD4(+) T-cells by inhibiting IFNG/IFN-gamma signaling, thereby preventing Ifng-mediated cell death of CD4(+) T-cells. Acts as a suppressor of inflammation by promoting recruitment of inflammation effectors, such as CGAS, RIGI/RIG-I and NLRP3, to autophagosome membranes, leading to their SQSTM1/p62-dependent autophagic degradation. Also directly inhibits assembly of the NLRP3 inflammasome by preventing the association between NLRP3 and PYCARD. Acts as a negative regulator of antiviral innate immune response by suppressing the RIPK2-dependent pro-inflammatory response: mediates recruitment of RIPosomes, composed of RIPK2 and NOD1 or NOD2, to autophagosome membranes, promoting their SQSTM1/p62-dependent autophagic degradation. The protein is Immunity-related GTPase family M protein of Rattus norvegicus (Rat).